The primary structure comprises 238 residues: Fatty acid metabolism regulator protein (238 aa).

The HTH gntR-type domain occupies 6–74; sequence KGPASFAEKY…HGKPTRVNNF (69 aa). Positions 34–53 form a DNA-binding region, H-T-H motif; sequence ERELSELIGVTRTTLREVLQ.

As to quaternary structure, homodimer.

Its subcellular location is the cytoplasm. Functionally, multifunctional regulator of fatty acid metabolism. The chain is Fatty acid metabolism regulator protein from Shewanella baltica (strain OS223).